A 397-amino-acid polypeptide reads, in one-letter code: Iripin-2 (397 aa).

Positions 1-21 are cleaved as a signal peptide; it reads MEDFKMKTLAAFLSLLVLCWA. 2 N-linked (GlcNAc...) asparagine glycosylation sites follow: Asn109 and Asn270.

Belongs to the serpin family. In terms of assembly, interacts with mouse MCPT4. As to expression, female salivary gland. Ovary. Midgut.

Its subcellular location is the secreted. In terms of biological role, serine protease inhibitor that modulates blood feeding of ticks on vertebrate species. Inhibits host trypsin, thrombin (F2), alpha-chymotrypsin, cathepsin G (CTSG) and mast cell chymase (CMA1). Inhibits host cathepsin G- and thrombin-induced platelet aggregation. Inhibits acute inflammation in the host. Suppresses neutrophil recruitment in inflamed area. Does not inhibit host plasmin (PLG), factor Xa (F10), factor XIa (F11), elastase and proteinase 3/myeloblastin (PRTN3). Its function is as follows. (Microbial infection) Inhibits IL6 production by mouse splenic dendritic cells in response to Borrelia burgdorferi exposure. Decreases levels of STAT3 phosphorylation in mouse splenic dendritic cells in response to Borrelia burgdorferi exposure and in Borrelia-primed CD4+ T-lymphocytes. Inhibits differentiation of mouse Th17 cells, a subset of CD4+ T-lymphocytes that play a crucial role in protection against extracellular bacteria, in response to Borrelia burgdorferi exposure via inhibition of the IL6/STAT3 signaling pathway. The sequence is that of Iripin-2 from Ixodes ricinus (Common tick).